Reading from the N-terminus, the 299-residue chain is Aspartate carbamoyltransferase catalytic subunit (299 aa).

Carbamoyl phosphate contacts are provided by arginine 54 and threonine 55. Position 83 (lysine 83) interacts with L-aspartate. Positions 104, 132, and 135 each coordinate carbamoyl phosphate. L-aspartate contacts are provided by arginine 165 and arginine 222. Residues leucine 261 and proline 262 each coordinate carbamoyl phosphate.

It belongs to the aspartate/ornithine carbamoyltransferase superfamily. ATCase family. Heterooligomer of catalytic and regulatory chains.

It catalyses the reaction carbamoyl phosphate + L-aspartate = N-carbamoyl-L-aspartate + phosphate + H(+). The protein operates within pyrimidine metabolism; UMP biosynthesis via de novo pathway; (S)-dihydroorotate from bicarbonate: step 2/3. Functionally, catalyzes the condensation of carbamoyl phosphate and aspartate to form carbamoyl aspartate and inorganic phosphate, the committed step in the de novo pyrimidine nucleotide biosynthesis pathway. This Archaeoglobus fulgidus (strain ATCC 49558 / DSM 4304 / JCM 9628 / NBRC 100126 / VC-16) protein is Aspartate carbamoyltransferase catalytic subunit.